We begin with the raw amino-acid sequence, 509 residues long: Heat shock 70 kDa protein 14 (509 aa).

The protein belongs to the heat shock protein 70 family. Component of ribosome-associated complex (RAC), a heterodimer composed of Hsp70/DnaK-type chaperone HSPA14 and Hsp40/DnaJ-type chaperone DNAJC2.

The protein resides in the cytoplasm. Its subcellular location is the cytosol. In terms of biological role, component of the ribosome-associated complex (RAC), a complex involved in folding or maintaining nascent polypeptides in a folding-competent state. In the RAC complex, binds to the nascent polypeptide chain, while DNAJC2 stimulates its ATPase activity. In Rattus norvegicus (Rat), this protein is Heat shock 70 kDa protein 14 (Hspa14).